We begin with the raw amino-acid sequence, 69 residues long: NAD(P)H-quinone oxidoreductase subunit O (69 aa).

Belongs to the complex I NdhO subunit family. In terms of assembly, NDH-1 can be composed of about 15 different subunits; different subcomplexes with different compositions have been identified which probably have different functions.

The protein resides in the cellular thylakoid membrane. It carries out the reaction a plastoquinone + NADH + (n+1) H(+)(in) = a plastoquinol + NAD(+) + n H(+)(out). It catalyses the reaction a plastoquinone + NADPH + (n+1) H(+)(in) = a plastoquinol + NADP(+) + n H(+)(out). In terms of biological role, NDH-1 shuttles electrons from an unknown electron donor, via FMN and iron-sulfur (Fe-S) centers, to quinones in the respiratory and/or the photosynthetic chain. The immediate electron acceptor for the enzyme in this species is believed to be plastoquinone. Couples the redox reaction to proton translocation, and thus conserves the redox energy in a proton gradient. Cyanobacterial NDH-1 also plays a role in inorganic carbon-concentration. This is NAD(P)H-quinone oxidoreductase subunit O from Acaryochloris marina (strain MBIC 11017).